A 173-amino-acid chain; its full sequence is Calmodulin-like protein 11 (173 aa).

Positions 1-26 (MEEIQQQQQQQQQQQQQQQQQQQQQQ) are enriched in low complexity. Residues 1 to 27 (MEEIQQQQQQQQQQQQQQQQQQQQQQE) form a disordered region. 4 EF-hand domains span residues 31 to 66 (EQIM…LDQN), 67 to 102 (PTEQ…QLQE), 104 to 139 (DADE…LGEK), and 140 to 173 (LTDE…MING). Ca(2+) is bound by residues aspartate 44, aspartate 46, aspartate 48, cysteine 50, glutamate 55, aspartate 80, aspartate 82, asparagine 84, threonine 86, glutamate 91, aspartate 117, aspartate 119, asparagine 121, tyrosine 123, glutamate 128, aspartate 153, aspartate 155, aspartate 157, glutamine 159, and glutamate 164.

It belongs to the calmodulin family.

Functionally, potential calcium sensor. The sequence is that of Calmodulin-like protein 11 (CML11) from Arabidopsis thaliana (Mouse-ear cress).